Consider the following 530-residue polypeptide: Ubiquitin carboxyl-terminal hydrolase 17-like protein 12 (530 aa).

Residues 80–375 form the USP domain; the sequence is AGLQNMGNTC…QAYVLFYIQK (296 aa). C89 (nucleophile) is an active-site residue. H334 (proton acceptor) is an active-site residue. Basic and acidic residues-rich tracts occupy residues 382-392 and 398-412; these read SESVSRGREPR and DTDRRATQGELKRDH. Disordered regions lie at residues 382–412 and 477–530; these read SESVSRGREPRALGAEDTDRRATQGELKRDH and NHHP…LVCQ. Positions 484 to 495 are enriched in low complexity; the sequence is SSLLKLSSTTPT. Residues 496 to 505 are compositionally biased toward polar residues; sequence HQESMNTGTL. The segment covering 510–524 has biased composition (basic residues); sequence GRARRSKGKNKHSKR.

Belongs to the peptidase C19 family. USP17 subfamily.

The protein localises to the nucleus. The protein resides in the endoplasmic reticulum. The catalysed reaction is Thiol-dependent hydrolysis of ester, thioester, amide, peptide and isopeptide bonds formed by the C-terminal Gly of ubiquitin (a 76-residue protein attached to proteins as an intracellular targeting signal).. Its function is as follows. Deubiquitinating enzyme that removes conjugated ubiquitin from specific proteins to regulate different cellular processes that may include cell proliferation, progression through the cell cycle, apoptosis, cell migration, and the cellular response to viral infection. This chain is Ubiquitin carboxyl-terminal hydrolase 17-like protein 12 (USP17L12), found in Homo sapiens (Human).